Reading from the N-terminus, the 518-residue chain is MVKTVDFSGRPFHFIGIGGIGMSALAYVLAKRQLPVSGSDLRSTHITERLQGVGAHIFSRQEATNLELFNSSPERVLETVSVAVNGTQPSYPNGNGKTFSDSPSLLLQETLPQVICSTAIAHNNSEYAAAKEKGCPIFHRSDVLAALIRDYQSIAVAGTHGKTTTSSLIGYMLLKADLDPTIIVGGEVDAWEGNARIGAKGGYLVAEADESDGSLTKHYPNIGIVTNIELDHPDHYQTLDDVVKTFQIFETQCDLLIGCLDCETVASELTPAITYSLDPSKGADYTVQNVTSNHKGTFAEVWERGNYLGEIRLTIPGSHNLSNALAAIAVGRKLGLNFAVIADALFTFAGAKRRFEQRGQCNGITFIDDYAHHPSEIEATLSAARSKVDGETISRVVAIFQPHRYSRTATFLKEFATCFKDADLVILTDIYSAGEVNLHNISGQDLAEAVENNHSQVIYEPSLKGLPQVIPDLIKPGDLVLFLGAGNLNQIIPEMINTYHTASTQSTANAMVETSINC.

158-164 (GTHGKTT) is a binding site for ATP.

This sequence belongs to the MurCDEF family.

The protein localises to the cytoplasm. It catalyses the reaction UDP-N-acetyl-alpha-D-muramate + L-alanine + ATP = UDP-N-acetyl-alpha-D-muramoyl-L-alanine + ADP + phosphate + H(+). It participates in cell wall biogenesis; peptidoglycan biosynthesis. Functionally, cell wall formation. The polypeptide is UDP-N-acetylmuramate--L-alanine ligase (Crocosphaera subtropica (strain ATCC 51142 / BH68) (Cyanothece sp. (strain ATCC 51142))).